We begin with the raw amino-acid sequence, 353 residues long: MDYTMEPNVTMTDYYPDFFTAPCDAEFLLRGSMLYLAILYCVLFVLGLLGNSLVILVLVGCKKLRSITDIYLLNLAASDLLFVLSIPFQTHNLLDQWVFGTAMCKVVSGLYYIGFFSSMFFITLMSVDRYLAIVHAVYAIKVRTASVGTALSLTVWLAAVTATIPLMVFYQVASEDGMLQCFQFYEEQSLRWKLFTHFEINALGLLLPFAILLFCYVRILQQLRGCLNHNRTRAIKLVLTVVIVSLLFWVPFNVALFLTSLHDLHILDGCATRQRLALAIHVTEVISFTHCCVNPVIYAFIGEKFKKHLMDVFQKSCSHIFLYLGRQMPVGALERQLSSNQRSSHSSTLDDIL.

Residues 1 to 33 (MDYTMEPNVTMTDYYPDFFTAPCDAEFLLRGSM) lie on the Extracellular side of the membrane. N8 carries an N-linked (GlcNAc...) asparagine glycan. The helical transmembrane segment at 34-61 (LYLAILYCVLFVLGLLGNSLVILVLVGC) threads the bilayer. Topologically, residues 62–71 (KKLRSITDIY) are cytoplasmic. Residues 72-91 (LLNLAASDLLFVLSIPFQTH) traverse the membrane as a helical segment. Residues 92 to 105 (NLLDQWVFGTAMCK) lie on the Extracellular side of the membrane. A disulfide bond links C104 and C181. Residues 106 to 127 (VVSGLYYIGFFSSMFFITLMSV) traverse the membrane as a helical segment. At 128–144 (DRYLAIVHAVYAIKVRT) the chain is on the cytoplasmic side. A helical transmembrane segment spans residues 145 to 169 (ASVGTALSLTVWLAAVTATIPLMVF). At 170–200 (YQVASEDGMLQCFQFYEEQSLRWKLFTHFEI) the chain is on the extracellular side. Residues 201–220 (NALGLLLPFAILLFCYVRIL) form a helical membrane-spanning segment. Residues 221 to 236 (QQLRGCLNHNRTRAIK) lie on the Cytoplasmic side of the membrane. Residues 237-261 (LVLTVVIVSLLFWVPFNVALFLTSL) form a helical membrane-spanning segment. Residues 262-278 (HDLHILDGCATRQRLAL) are Extracellular-facing. The helical transmembrane segment at 279–302 (AIHVTEVISFTHCCVNPVIYAFIG) threads the bilayer. Over 303 to 353 (EKFKKHLMDVFQKSCSHIFLYLGRQMPVGALERQLSSNQRSSHSSTLDDIL) the chain is Cytoplasmic.

The protein belongs to the G-protein coupled receptor 1 family. Expressed in thymus.

Its subcellular location is the cell membrane. Receptor for the CCL1/SCY1/TCA-3 chemokine. This is C-C chemokine receptor type 8 (Ccr8) from Mus musculus (Mouse).